Consider the following 213-residue polypeptide: Serine acetyltransferase (213 aa).

This sequence belongs to the transferase hexapeptide repeat family.

It is found in the cytoplasm. It catalyses the reaction L-serine + acetyl-CoA = O-acetyl-L-serine + CoA. It functions in the pathway amino-acid biosynthesis; L-cysteine biosynthesis; L-cysteine from L-serine: step 1/2. This is Serine acetyltransferase (cysE) from Staphylococcus aureus (strain COL).